Consider the following 98-residue polypeptide: ESAT-6-like protein EsxM (98 aa).

It belongs to the WXG100 family. CFP-10 subfamily.

It localises to the secreted. Its function is as follows. Alters the host macrophage cytoskeleton and enhances macrophage motility. Promotes granuloma efflux, extrapulmonary dissemination of infection and bone disease. The sequence is that of ESAT-6-like protein EsxM from Mycobacterium marinum (strain ATCC BAA-535 / M).